Here is a 142-residue protein sequence, read N- to C-terminus: Hemoglobin subunit epsilon (142 aa).

The Globin domain maps to H3–L142. Phosphoserine occurs at positions 14 and 51. Heme b-binding residues include H64 and H93.

The protein belongs to the globin family. In terms of assembly, heterotetramer of two alpha chains and two epsilon chains in early embryonic hemoglobin Gower-2; two zeta chains and two epsilon chains in early embryonic hemoglobin Gower-1. In terms of tissue distribution, red blood cells.

The epsilon chain is a beta-type chain of early mammalian embryonic hemoglobin. The chain is Hemoglobin subunit epsilon (HBE1) from Callithrix geoffroyi (Geoffroy's marmoset).